Reading from the N-terminus, the 80-residue chain is Small ribosomal subunit protein bS18 (80 aa).

The protein belongs to the bacterial ribosomal protein bS18 family. In terms of assembly, part of the 30S ribosomal subunit. Forms a tight heterodimer with protein bS6.

Binds as a heterodimer with protein bS6 to the central domain of the 16S rRNA, where it helps stabilize the platform of the 30S subunit. The protein is Small ribosomal subunit protein bS18 of Staphylococcus epidermidis (strain ATCC 35984 / DSM 28319 / BCRC 17069 / CCUG 31568 / BM 3577 / RP62A).